The primary structure comprises 241 residues: Probable transcriptional regulatory protein Rmet_0785 (241 aa).

The protein belongs to the TACO1 family.

The protein resides in the cytoplasm. The chain is Probable transcriptional regulatory protein Rmet_0785 from Cupriavidus metallidurans (strain ATCC 43123 / DSM 2839 / NBRC 102507 / CH34) (Ralstonia metallidurans).